The following is a 1183-amino-acid chain: ATP-dependent helicase/nuclease subunit A (1183 aa).

The UvrD-like helicase ATP-binding domain occupies 3–461 (VQWTDEQQRA…IDLTKNFRSR (459 aa)). 24–31 (AAAGSGKT) contacts ATP. In terms of domain architecture, UvrD-like helicase C-terminal spans 473 to 769 (RQVMDEAVGE…RIMTIHQSKG (297 aa)).

The protein belongs to the helicase family. AddA subfamily. As to quaternary structure, heterodimer of AddA and AddB/RexB. It depends on Mg(2+) as a cofactor.

It carries out the reaction Couples ATP hydrolysis with the unwinding of duplex DNA by translocating in the 3'-5' direction.. The enzyme catalyses ATP + H2O = ADP + phosphate + H(+). The heterodimer acts as both an ATP-dependent DNA helicase and an ATP-dependent, dual-direction single-stranded exonuclease. Recognizes the chi site generating a DNA molecule suitable for the initiation of homologous recombination. The AddA nuclease domain is required for chi fragment generation; this subunit has the helicase and 3' -&gt; 5' nuclease activities. The protein is ATP-dependent helicase/nuclease subunit A of Exiguobacterium sibiricum (strain DSM 17290 / CCUG 55495 / CIP 109462 / JCM 13490 / 255-15).